The primary structure comprises 206 residues: ATP-dependent Clp protease proteolytic subunit 1 (206 aa).

Serine 103 serves as the catalytic Nucleophile. Histidine 128 is a catalytic residue.

It belongs to the peptidase S14 family. In terms of assembly, fourteen ClpP subunits assemble into 2 heptameric rings which stack back to back to give a disk-like structure with a central cavity, resembling the structure of eukaryotic proteasomes.

The protein resides in the cytoplasm. It catalyses the reaction Hydrolysis of proteins to small peptides in the presence of ATP and magnesium. alpha-casein is the usual test substrate. In the absence of ATP, only oligopeptides shorter than five residues are hydrolyzed (such as succinyl-Leu-Tyr-|-NHMec, and Leu-Tyr-Leu-|-Tyr-Trp, in which cleavage of the -Tyr-|-Leu- and -Tyr-|-Trp bonds also occurs).. In terms of biological role, cleaves peptides in various proteins in a process that requires ATP hydrolysis. Has a chymotrypsin-like activity. Plays a major role in the degradation of misfolded proteins. The sequence is that of ATP-dependent Clp protease proteolytic subunit 1 from Protochlamydia amoebophila (strain UWE25).